The chain runs to 442 residues: Hydrolase phmG (442 aa).

Serine 259 functions as the Nucleophile in the catalytic mechanism.

The protein belongs to the AB hydrolase superfamily. FUS2 hydrolase family. As to quaternary structure, homodimer.

Its pathway is mycotoxin biosynthesis. Functionally, hydrolyase; part of the gene cluster that mediates the biosynthesis of the mycotoxins phomacins, leucine-derived cytochalasans with potent actin polymerization-inhibitory activities and monocot-specific antigerminative activities. The first step in the pathway is catalyzed by the hybrid PKS-NRPS phmA, assisted by the enoyl reductase phmE, that are responsible for fusion of the leucine precursor and the polyketide backbone to produce a 2-pyrrolidone intermediate. The polyketide synthase module (PKS) of phmA is responsible for the synthesis of the polyketide backbone and the downstream nonribosomal peptide synthetase (NRPS) amidates the carboxyl end of the polyketide with the leucine precursor. Because phmA lacks a designated enoylreductase (ER) domain, the required activity is provided the enoyl reductase phmE. Reduction by the hydrolyase phmG, followed by dehydration and intra-molecular Diels-Alder cyclization by the Diels-Alderase phmD then yield the required isoindolone-fused macrocycle. A number of oxidative steps catalyzed by the tailoring cytochrome P450 monooxygenase phmB, the FAD-linked oxidoreductase phmC and the short-chain dehydrogenase/reductase phmF, are further required to afford the final products, phomacin D and phomacin E. This chain is Hydrolase phmG, found in Phaeosphaeria nodorum (strain SN15 / ATCC MYA-4574 / FGSC 10173) (Glume blotch fungus).